The primary structure comprises 562 residues: Probable ganciclovir kinase (562 aa).

The span at 1 to 16 (MDNGVETPQGQKTQPI) shows a compositional bias: polar residues. The segment at 1 to 32 (MDNGVETPQGQKTQPINLPPVRKKLRKHEGLG) is disordered. ATP-binding positions include 201–209 (LGVGAYGKV) and Lys218. Asp313 serves as the catalytic Proton acceptor.

The protein belongs to the protein kinase superfamily. Tyr protein kinase family. HCMV ganciclovir subfamily.

Its function is as follows. Phosphorylates the antiviral nucleoside analog ganciclovir. In Homo sapiens (Human), this protein is Probable ganciclovir kinase (U69).